Consider the following 459-residue polypeptide: NADP-specific glutamate dehydrogenase (459 aa).

Residue lysine 114 is part of the active site.

The protein belongs to the Glu/Leu/Phe/Val dehydrogenases family. Homohexamer.

It catalyses the reaction L-glutamate + NADP(+) + H2O = 2-oxoglutarate + NH4(+) + NADPH + H(+). In Emericella nidulans (strain FGSC A4 / ATCC 38163 / CBS 112.46 / NRRL 194 / M139) (Aspergillus nidulans), this protein is NADP-specific glutamate dehydrogenase (gdhA).